Here is a 234-residue protein sequence, read N- to C-terminus: Isoprenyl transferase (234 aa).

Aspartate 13 is an active-site residue. Aspartate 13 contacts Mg(2+). Substrate is bound by residues 14-17, tryptophan 18, arginine 26, histidine 30, and 58-60; these read GNGR and STE. The active-site Proton acceptor is the asparagine 61. Substrate is bound by residues tryptophan 62, arginine 64, arginine 180, and 186–188; that span reads RLS. Glutamate 199 is a Mg(2+) binding site.

This sequence belongs to the UPP synthase family. Homodimer. Requires Mg(2+) as cofactor.

In terms of biological role, catalyzes the condensation of isopentenyl diphosphate (IPP) with allylic pyrophosphates generating different type of terpenoids. In Helicobacter pylori (strain J99 / ATCC 700824) (Campylobacter pylori J99), this protein is Isoprenyl transferase.